A 330-amino-acid polypeptide reads, in one-letter code: Beta-ketoacyl-[acyl-carrier-protein] synthase III (330 aa).

Catalysis depends on residues C114 and H255. The tract at residues 256–260 is ACP-binding; sequence QANQR. N285 is an active-site residue.

This sequence belongs to the thiolase-like superfamily. FabH family. In terms of assembly, homodimer.

The protein resides in the cytoplasm. The enzyme catalyses malonyl-[ACP] + acetyl-CoA + H(+) = 3-oxobutanoyl-[ACP] + CO2 + CoA. The protein operates within lipid metabolism; fatty acid biosynthesis. Functionally, catalyzes the condensation reaction of fatty acid synthesis by the addition to an acyl acceptor of two carbons from malonyl-ACP. Catalyzes the first condensation reaction which initiates fatty acid synthesis and may therefore play a role in governing the total rate of fatty acid production. Possesses both acetoacetyl-ACP synthase and acetyl transacylase activities. Its substrate specificity determines the biosynthesis of branched-chain and/or straight-chain of fatty acids. The chain is Beta-ketoacyl-[acyl-carrier-protein] synthase III from Trichormus variabilis (strain ATCC 29413 / PCC 7937) (Anabaena variabilis).